Here is a 215-residue protein sequence, read N- to C-terminus: Probable transaldolase (215 aa).

Lys-83 (schiff-base intermediate with substrate) is an active-site residue.

It belongs to the transaldolase family. Type 3B subfamily.

The protein localises to the cytoplasm. The enzyme catalyses D-sedoheptulose 7-phosphate + D-glyceraldehyde 3-phosphate = D-erythrose 4-phosphate + beta-D-fructose 6-phosphate. Its pathway is carbohydrate degradation; pentose phosphate pathway; D-glyceraldehyde 3-phosphate and beta-D-fructose 6-phosphate from D-ribose 5-phosphate and D-xylulose 5-phosphate (non-oxidative stage): step 2/3. Functionally, transaldolase is important for the balance of metabolites in the pentose-phosphate pathway. This chain is Probable transaldolase, found in Clostridium perfringens (strain ATCC 13124 / DSM 756 / JCM 1290 / NCIMB 6125 / NCTC 8237 / Type A).